The primary structure comprises 343 residues: ABC transporter riboflavin-binding protein RfuA (343 aa).

A signal peptide spans M1–S19. The N-palmitoyl cysteine moiety is linked to residue C20. C20 is lipidated: S-diacylglycerol cysteine. Riboflavin-binding positions include S43–Y46, D124, Q140, Y176, W208, and D255.

It belongs to the BMP lipoprotein family. In terms of assembly, monomer in solution. The complex is probably composed of two ATP-binding proteins (RfuB), two transmembrane proteins (RfuC and RfuD) and a solute-binding protein (RfuA).

It is found in the cell inner membrane. Functionally, probably part of the ABC transporter complex RfuABCD involved in riboflavin import. Binds riboflavin. The chain is ABC transporter riboflavin-binding protein RfuA from Treponema pallidum (strain Nichols).